We begin with the raw amino-acid sequence, 233 residues long: MADS-box transcription factor 56 (233 aa).

Positions 1-61 (MVRGRTELKR…GRLYEFASAP (61 aa)) constitute an MADS-box domain. A K-box domain is found at 87–177 (IQQVKDDTLG…RGKHRNLEAA (91 aa)).

Its subcellular location is the nucleus. Functionally, probable transcription factor. In Oryza sativa subsp. japonica (Rice), this protein is MADS-box transcription factor 56 (MADS56).